Consider the following 474-residue polypeptide: Proline--tRNA ligase (474 aa).

This sequence belongs to the class-II aminoacyl-tRNA synthetase family. ProS type 3 subfamily. Homodimer.

It localises to the cytoplasm. The catalysed reaction is tRNA(Pro) + L-proline + ATP = L-prolyl-tRNA(Pro) + AMP + diphosphate. Functionally, catalyzes the attachment of proline to tRNA(Pro) in a two-step reaction: proline is first activated by ATP to form Pro-AMP and then transferred to the acceptor end of tRNA(Pro). This is Proline--tRNA ligase from Aster yellows witches'-broom phytoplasma (strain AYWB).